The following is a 37-amino-acid chain: Large ribosomal subunit protein bL36 (37 aa).

Belongs to the bacterial ribosomal protein bL36 family.

The chain is Large ribosomal subunit protein bL36 from Aliarcobacter butzleri (strain RM4018) (Arcobacter butzleri).